The primary structure comprises 438 residues: Aspartate--tRNA(Asp/Asn) ligase (438 aa).

Glu176 provides a ligand contact to L-aspartate. The segment at 198-201 (QLYK) is aspartate. Arg220 is an L-aspartate binding site. Residues 220-222 (RAE), 228-230 (RHL), and Glu361 contribute to the ATP site. 2 residues coordinate Mg(2+): Glu361 and Ser364. L-aspartate is bound by residues Ser364 and Arg368. 409–412 (GADR) lines the ATP pocket.

The protein belongs to the class-II aminoacyl-tRNA synthetase family. Type 2 subfamily. In terms of assembly, homodimer. Mg(2+) serves as cofactor.

It is found in the cytoplasm. It catalyses the reaction tRNA(Asx) + L-aspartate + ATP = L-aspartyl-tRNA(Asx) + AMP + diphosphate. Aspartyl-tRNA synthetase with relaxed tRNA specificity since it is able to aspartylate not only its cognate tRNA(Asp) but also tRNA(Asn). Reaction proceeds in two steps: L-aspartate is first activated by ATP to form Asp-AMP and then transferred to the acceptor end of tRNA(Asp/Asn). The protein is Aspartate--tRNA(Asp/Asn) ligase of Methanococcus maripaludis (strain C7 / ATCC BAA-1331).